A 1077-amino-acid chain; its full sequence is Bifunctional helicase and thymine dioxygenase JBP2 (1077 aa).

The tract at residues 1-516 (MPMFMDGASQ…PPLCIPFKIA (516 aa)) is thymine dioxygenase. Residues His391, Asp393, and His441 each coordinate Fe cation. A 2-oxoglutarate-binding site is contributed by Arg455. A DNA Helicase region spans residues 517-1075 (KTLSLTQHAA…RNIDTVKSER (559 aa)). The Helicase ATP-binding domain occupies 531–706 (SRRIKEGDGC…YRLVGWVDDK (176 aa)). 544–551 (LTMGLGKT) provides a ligand contact to ATP. The DEAH box signature appears at 657 to 660 (DEGH). The Helicase C-terminal domain maps to 871–1032 (KLTALISILH…QVVPGHDLVD (162 aa)).

It in the C-terminal section; belongs to the SNF2/RAD54 helicase family. The protein in the N-terminal section; belongs to the TET family. JBP2 subfamily. It depends on Fe(2+) as a cofactor.

The protein localises to the nucleus. The enzyme catalyses ATP + H2O = ADP + phosphate + H(+). It catalyses the reaction thymine + 2-oxoglutarate + O2 = 5-hydroxymethyluracil + succinate + CO2. Its function is as follows. Dioxygenase that catalyzes the first step of DNA base J (beta-d-glucosyl-HOMedU) biosynthesis by converting thymine to 5-hydroxymethyluracil (HOMedU). DNA base J is a hypermodified thymidine residue found in the genome of kinetoplastid parasites, which is localized primarily to repetitive DNA, namely the telomeres, and is implicated in the regulation of antigenic variation. Probably also acts as a DNA helicase. Recognizes and binds specific regions of the genome, hydrolyzes ATP and allows the DNA base J de novo synthesis. Involved in initial synthesis of DNA base J, JBP1 being able to act via the basal level of DNA base J and propagate further synthesis. In contrast to JBP1, it does not specifically bind DNA base J, however it binds chromatin. The protein is Bifunctional helicase and thymine dioxygenase JBP2 (JBP2) of Trypanosoma brucei brucei (strain 927/4 GUTat10.1).